The following is a 234-amino-acid chain: UPF0104 membrane protein MJ1078 (234 aa).

Helical transmembrane passes span 32–52, 70–90, 123–143, 164–184, and 198–218; these read VGTVFIERVFDLVAMISLLFI, IKWGVIIILFLIILIFGFLIV, LITLSFTGWFIEGLTVYFIFL, LTAIPLTPSGLGVVEYALIYI, and VLILYRLISYFSIVLFGAIMF.

This sequence belongs to the UPF0104 family.

It localises to the cell membrane. This chain is UPF0104 membrane protein MJ1078, found in Methanocaldococcus jannaschii (strain ATCC 43067 / DSM 2661 / JAL-1 / JCM 10045 / NBRC 100440) (Methanococcus jannaschii).